Here is a 364-residue protein sequence, read N- to C-terminus: Photoreceptor outer segment membrane glycoprotein 2 (364 aa).

Topologically, residues 1 to 24 (MTVLKVKFTKTKRDKLAQILWILN) are cytoplasmic. The helical transmembrane segment at 25–43 (WVSVVSGIILFSLGLFLKI) threads the bilayer. The Lumenal segment spans residues 44 to 61 (EIKKRNEVMAKGDINSVP). The chain crosses the membrane as a helical span at residues 62 to 80 (NMLISVGVIACVVNFLGGK). Residues 81–99 (ICYDCSDANKFSRWKLIML) lie on the Cytoplasmic side of the membrane. A helical transmembrane segment spans residues 100 to 123 (PYIICTFCFTFCILLGALMCYTMR). Topologically, residues 124-264 (NELEESLYLG…LEYYTAIMRS (141 aa)) are lumenal. Asn229 carries an N-linked (GlcNAc...) asparagine glycan. Residues 265–290 (IGIAALLIWLFELSVLIGVRYLQTAM) traverse the membrane as a helical segment. Residues 291–364 (KNVLLQGDLQ…VTAKSIPAAS (74 aa)) lie on the Cytoplasmic side of the membrane.

It belongs to the PRPH2/ROM1 family.

It localises to the membrane. The protein is Photoreceptor outer segment membrane glycoprotein 2 of Gallus gallus (Chicken).